Here is a 171-residue protein sequence, read N- to C-terminus: NADH-quinone oxidoreductase subunit I (171 aa).

2 consecutive 4Fe-4S ferredoxin-type domains span residues 63–92 (RRYENGEERCIACKLCEAVCPALAITIESD) and 102–131 (TRYDIDLTKCIFCGFCEESCPVDSIVETQI). [4Fe-4S] cluster is bound by residues cysteine 72, cysteine 75, cysteine 78, cysteine 82, cysteine 111, cysteine 114, cysteine 117, and cysteine 121.

This sequence belongs to the complex I 23 kDa subunit family. As to quaternary structure, NDH-1 is composed of 14 different subunits. Subunits NuoA, H, J, K, L, M, N constitute the membrane sector of the complex. [4Fe-4S] cluster is required as a cofactor.

It localises to the cell inner membrane. The enzyme catalyses a quinone + NADH + 5 H(+)(in) = a quinol + NAD(+) + 4 H(+)(out). In terms of biological role, NDH-1 shuttles electrons from NADH, via FMN and iron-sulfur (Fe-S) centers, to quinones in the respiratory chain. The immediate electron acceptor for the enzyme in this species is believed to be ubiquinone. Couples the redox reaction to proton translocation (for every two electrons transferred, four hydrogen ions are translocated across the cytoplasmic membrane), and thus conserves the redox energy in a proton gradient. The polypeptide is NADH-quinone oxidoreductase subunit I (Paracidovorax citrulli (strain AAC00-1) (Acidovorax citrulli)).